Here is a 263-residue protein sequence, read N- to C-terminus: Endonuclease 8 (263 aa).

Pro-2 (schiff-base intermediate with DNA) is an active-site residue. Residue Glu-3 is the Proton donor of the active site. The active-site Proton donor; for beta-elimination activity is Lys-53. 3 residues coordinate DNA: Gln-70, Arg-125, and Asn-169. An FPG-type zinc finger spans residues 229–263; the sequence is KVFHRDGEPCERCGSIIEKTTLSSRPFYWCPGCQH. Arg-253 functions as the Proton donor; for delta-elimination activity in the catalytic mechanism.

This sequence belongs to the FPG family. It depends on Zn(2+) as a cofactor.

It catalyses the reaction 2'-deoxyribonucleotide-(2'-deoxyribose 5'-phosphate)-2'-deoxyribonucleotide-DNA = a 3'-end 2'-deoxyribonucleotide-(2,3-dehydro-2,3-deoxyribose 5'-phosphate)-DNA + a 5'-end 5'-phospho-2'-deoxyribonucleoside-DNA + H(+). Involved in base excision repair of DNA damaged by oxidation or by mutagenic agents. Acts as a DNA glycosylase that recognizes and removes damaged bases. Has a preference for oxidized pyrimidines, such as thymine glycol, 5,6-dihydrouracil and 5,6-dihydrothymine. Has AP (apurinic/apyrimidinic) lyase activity and introduces nicks in the DNA strand. Cleaves the DNA backbone by beta-delta elimination to generate a single-strand break at the site of the removed base with both 3'- and 5'-phosphates. The protein is Endonuclease 8 of Escherichia coli (strain K12 / MC4100 / BW2952).